We begin with the raw amino-acid sequence, 388 residues long: Na(+)/H(+) antiporter NhaA (388 aa).

Over 1–11 (MKHLHRFFSSD) the chain is Cytoplasmic. Residues 12 to 31 (ASGGIILIIAAILAMIMANS) form a helical membrane-spanning segment. Residues 32–58 (GATSGWYHDFLETPVQLRVGSLEINKN) lie on the Periplasmic side of the membrane. Residues 59–80 (MLLWINDALMAVFFLLVGLEVK) traverse the membrane as a helical segment. The Cytoplasmic portion of the chain corresponds to 81–96 (RELMQGSLASLLQAAF). A helical membrane pass occupies residues 97-116 (PVIAAIGGMIVPALLYLAFN). Residues 117-122 (YADPIT) are Periplasmic-facing. The chain crosses the membrane as a helical span at residues 123–130 (REGWAIPA). Residues 131 to 154 (ATDIAFALGVLALLGSRVPLVLKI) lie on the Cytoplasmic side of the membrane. A helical transmembrane segment spans residues 155-176 (FLMALAIIDDLGAIIIIALFYT). Topologically, residues 177–180 (NDLS) are periplasmic. A helical transmembrane segment spans residues 181 to 200 (MASLGVAAVAIAVLAVLNLC). The Cytoplasmic portion of the chain corresponds to 201 to 204 (GVRR). Residues 205-222 (TGVYILVGVVLWTAVLKS) traverse the membrane as a helical segment. Gly-223 is a topological domain (periplasmic). The chain crosses the membrane as a helical span at residues 224–236 (VHATLAGVIVGFF). The Cytoplasmic segment spans residues 237-253 (IPLKEKHGRSPAKRLEH). Residues 254–272 (VLHPWVAYLILPLFAFANA) form a helical membrane-spanning segment. Topologically, residues 273-286 (GVSLQGVTLDGLTS) are periplasmic. Residues 287–310 (ILPLGIIAGLLIGKPLGISLFCWL) traverse the membrane as a helical segment. At 311–339 (ALRLKLAHLPEGTTYQQIMVVGILCGIGF) the chain is on the cytoplasmic side. The helical transmembrane segment at 340-350 (TMSIFIASLAF) threads the bilayer. Over 351 to 357 (GSVDPEL) the chain is Periplasmic. Residues 358–380 (INWAKLGILVGSISSAVIGYSWL) form a helical membrane-spanning segment. Residues 381–388 (RVRLRPSV) lie on the Cytoplasmic side of the membrane.

The protein belongs to the NhaA Na(+)/H(+) (TC 2.A.33) antiporter family.

It is found in the cell inner membrane. The enzyme catalyses Na(+)(in) + 2 H(+)(out) = Na(+)(out) + 2 H(+)(in). Functionally, na(+)/H(+) antiporter that extrudes sodium in exchange for external protons. This chain is Na(+)/H(+) antiporter NhaA, found in Shigella flexneri serotype 5b (strain 8401).